A 372-amino-acid polypeptide reads, in one-letter code: Protein phosphatase Mn(2+)-dependent 1K (372 aa).

A mitochondrion-targeting transit peptide spans 1–29 (MLSTAFITLVRSGRNQVKKRVLLSSILLQ). Residues 46-61 (RCSRFDPDGSGQPATW) form a critical for association with the BCKDH complex region. The PPM-type phosphatase domain occupies 94–346 (NVGCASLIGK…DNSTAVVVPF (253 aa)). Residues D127 and G128 each coordinate Mn(2+). S248 is subject to Phosphoserine. Mn(2+)-binding residues include D298 and D337.

The protein belongs to the PP2C family. As to quaternary structure, interacts with E1 and E2 components of the branched-chain alpha-ketoacid dehydrogenase (BCKDH) complex. Interacts with both BCKDHA and BCKDHB chains of the E1 subunit. Interacts with the 24-meric DBT/E2 core of the BCKD complex with a 1:1 stoichiometry; the N-terminal region (residues 49-61) of PPM1K and C-terminal linker of the lipoyl domain of DBT/E2 (residues 145-160) are critical for this interaction whereas the lipoyl prosthetic group is dispensable. Competes with BCKDK for binding to DBT/E2; this interaction is modulated by branched-chain alpha-keto acids (BCKAs). At steady state, BCKDH holoenzyme preferentially binds BCKDK and BCKDHA/E1 is phosphorylated. In response to high levels of BCKAs, BCKDK is replaced by PPM1K leading to BCKDHA/E1 dephosphorylation. It depends on Mn(2+) as a cofactor.

It localises to the mitochondrion matrix. It carries out the reaction O-phospho-L-seryl-[3-methyl-2-oxobutanoate dehydrogenase] + H2O = L-seryl-[3-methyl-2-oxobutanoate dehydrogenase] + phosphate. The enzyme catalyses O-phospho-L-seryl-[protein] + H2O = L-seryl-[protein] + phosphate. The protein operates within protein modification. Functionally, serine/threonine-protein phosphatase component of macronutrients metabolism. Together with BCKDK serves as a metabolic regulatory node that coordinates branched-chain amino acids (BCAAs) and protein synthesis with glucose and lipid metabolism via two distinct phosphoprotein targets: BCKDHA/E1a subunit of the branched-chain alpha-ketoacid dehydrogenase (BCKDH) complex and ACLY, a lipogenic enzyme of Krebs cycle. At high levels of branched-chain ketoacids (BCKAs), dephosphorylates and activates mitochondrial BCKDH complex, a multisubunit complex consisting of three components, heterotetrameric E1 composed of BCKDHA and BCKDHB chains, 24-meric E2 core composed of DBT and homodimeric E3 composed of DLD, each involved in different steps of BCAA catabolism. Tightly associates with the E2 subunit of BCKDH complex and dephosphorylates Ser-333 of BCKDHA chain of the E1 subunit likely through on-off binding to individual E2 subunits of the 24-meric E2 core to increase the efficiency of the dephosphorylation reaction. Appears to dephosphorylate and inactivate cytosolic ACLY in response to changes of cellular carbohydrate abundance. Overnutrition and in particular high-fructose diet, activates MLXIPL/ChREBP leading to increased BCKDK to PPM1K ratio, phosphorylation of ACLY on Ser-454 and activation of its enzymatic activity that ultimately results in the generation of acetyl-CoA and malonyl-CoA immediate substrates of de novo lipogenesis. Recognizes phosphosites having SxS or RxxS motifs and strictly depends on Mn(2+) ions for the phosphatase activity. Regulates Ca(2+)-induced opening of mitochondrial transition pore and apoptotic cell death. The chain is Protein phosphatase Mn(2+)-dependent 1K (Ppm1k) from Rattus norvegicus (Rat).